Consider the following 266-residue polypeptide: Glucosamine-6-phosphate deaminase (266 aa).

Asp-72 (proton acceptor; for enolization step) is an active-site residue. Residue Asp-141 is the For ring-opening step of the active site. The active-site Proton acceptor; for ring-opening step is the His-143. The active-site For ring-opening step is Glu-148.

Belongs to the glucosamine/galactosamine-6-phosphate isomerase family. NagB subfamily. As to quaternary structure, homohexamer.

It catalyses the reaction alpha-D-glucosamine 6-phosphate + H2O = beta-D-fructose 6-phosphate + NH4(+). Its pathway is amino-sugar metabolism; N-acetylneuraminate degradation; D-fructose 6-phosphate from N-acetylneuraminate: step 5/5. Its activity is regulated as follows. Allosterically activated by N-acetylglucosamine 6-phosphate (GlcNAc6P). Functionally, catalyzes the reversible isomerization-deamination of glucosamine 6-phosphate (GlcN6P) to form fructose 6-phosphate (Fru6P) and ammonium ion. This Salmonella arizonae (strain ATCC BAA-731 / CDC346-86 / RSK2980) protein is Glucosamine-6-phosphate deaminase.